A 178-amino-acid chain; its full sequence is Inorganic pyrophosphatase (178 aa).

Positions 30, 44, and 56 each coordinate substrate. Positions 66, 71, and 103 each coordinate Mg(2+). Y140 serves as a coordination point for substrate.

The protein belongs to the PPase family. Homohexamer. Mg(2+) serves as cofactor.

It localises to the cytoplasm. The catalysed reaction is diphosphate + H2O = 2 phosphate + H(+). Catalyzes the hydrolysis of inorganic pyrophosphate (PPi) forming two phosphate ions. The sequence is that of Inorganic pyrophosphatase from Pyrococcus horikoshii (strain ATCC 700860 / DSM 12428 / JCM 9974 / NBRC 100139 / OT-3).